Here is a 127-residue protein sequence, read N- to C-terminus: Multiple antibiotic resistance protein MarA (127 aa).

Positions 12–110 constitute an HTH araC/xylS-type domain; that stretch reads HSILDWIEDN…DVPPHKYRMT (99 aa). 2 DNA-binding regions (H-T-H motif) span residues 29-50 and 77-100; these read EKVS…KKET and ILYL…KNYF.

In terms of assembly, monomer.

May be a transcriptional activator of genes involved in the multiple antibiotic resistance (Mar) phenotype. It can also activate genes such as sodA, zwf and micF. The chain is Multiple antibiotic resistance protein MarA (marA) from Escherichia coli (strain K12).